Reading from the N-terminus, the 140-residue chain is Holo-[acyl-carrier-protein] synthase (140 aa).

Mg(2+)-binding residues include D7 and E58.

This sequence belongs to the P-Pant transferase superfamily. AcpS family. Mg(2+) serves as cofactor.

The protein localises to the cytoplasm. The enzyme catalyses apo-[ACP] + CoA = holo-[ACP] + adenosine 3',5'-bisphosphate + H(+). Functionally, transfers the 4'-phosphopantetheine moiety from coenzyme A to a Ser of acyl-carrier-protein. This chain is Holo-[acyl-carrier-protein] synthase, found in Chloroflexus aggregans (strain MD-66 / DSM 9485).